A 336-amino-acid chain; its full sequence is HTH-type transcriptional repressor PurR (336 aa).

Residues 2–56 form the HTH lacI-type domain; it reads ATIKDVAKLAGVSTTTVSHVINKTRFVAEDTSKAVWDAIQQLNYSPSAVARSLKV. The segment at residues 4–23 is a DNA-binding region (H-T-H motif); it reads IKDVAKLAGVSTTTVSHVIN. A DNA-binding region spans residues 48 to 56; sequence SAVARSLKV. Y73, K188, F219, and D273 together coordinate hypoxanthine.

In terms of assembly, homodimer.

The protein operates within purine metabolism; purine nucleotide biosynthesis [regulation]. In terms of biological role, is the main repressor of the genes involved in the de novo synthesis of purine nucleotides, regulating purB, purC, purEK, purF, purHD, purL, purMN and guaBA expression. PurR is allosterically activated to bind its cognate DNA by binding the purine corepressors, hypoxanthine or guanine, thereby effecting transcription repression. This chain is HTH-type transcriptional repressor PurR, found in Actinobacillus pleuropneumoniae serotype 3 (strain JL03).